The following is a 91-amino-acid chain: Probable Fe(2+)-trafficking protein (91 aa).

It belongs to the Fe(2+)-trafficking protein family.

Functionally, could be a mediator in iron transactions between iron acquisition and iron-requiring processes, such as synthesis and/or repair of Fe-S clusters in biosynthetic enzymes. This Glaesserella parasuis serovar 5 (strain SH0165) (Haemophilus parasuis) protein is Probable Fe(2+)-trafficking protein.